We begin with the raw amino-acid sequence, 241 residues long: SURF1-like protein (241 aa).

Helical transmembrane passes span 5–25 and 199–219; these read LTVL…LNRL and LEYA…YRIY.

This sequence belongs to the SURF1 family.

It is found in the cell membrane. This Rickettsia bellii (strain RML369-C) protein is SURF1-like protein.